A 205-amino-acid polypeptide reads, in one-letter code: IQ domain-containing protein F1 (205 aa).

Composition is skewed to basic and acidic residues over residues 1–24 (MEEK…KEMP) and 51–68 (ANEK…LSDK). A disordered region spans residues 1–68 (MEEKQPQKTK…PENQKKLSDK (68 aa)). IQ domains lie at 68 to 97 (KDTV…SACI) and 124 to 153 (KEWA…AVRI).

In terms of assembly, interacts with calmodulin.

The protein resides in the cytoplasmic vesicle. It localises to the secretory vesicle. Its subcellular location is the acrosome. Its function is as follows. Involved in sperm capacitation and acrosome reaction. The protein is IQ domain-containing protein F1 of Homo sapiens (Human).